The primary structure comprises 281 residues: Phosphatidylglycerol--prolipoprotein diacylglyceryl transferase (281 aa).

Transmembrane regions (helical) follow at residues 23–43 (IGPL…LFAW), 71–91 (FVIW…VLFY), 107–127 (WDGG…MILF), and 133–153 (ILVW…LGVV). Arginine 154 provides a ligand contact to a 1,2-diacyl-sn-glycero-3-phospho-(1'-sn-glycerol). 3 helical membrane passes run 189-209 (LYEA…LVWG), 217-237 (GFVA…VEFF), and 247-267 (LFGG…LLGL).

Belongs to the Lgt family.

It localises to the cell inner membrane. It catalyses the reaction L-cysteinyl-[prolipoprotein] + a 1,2-diacyl-sn-glycero-3-phospho-(1'-sn-glycerol) = an S-1,2-diacyl-sn-glyceryl-L-cysteinyl-[prolipoprotein] + sn-glycerol 1-phosphate + H(+). The protein operates within protein modification; lipoprotein biosynthesis (diacylglyceryl transfer). Functionally, catalyzes the transfer of the diacylglyceryl group from phosphatidylglycerol to the sulfhydryl group of the N-terminal cysteine of a prolipoprotein, the first step in the formation of mature lipoproteins. The chain is Phosphatidylglycerol--prolipoprotein diacylglyceryl transferase from Brucella canis (strain ATCC 23365 / NCTC 10854 / RM-666).